Consider the following 385-residue polypeptide: Beta sliding clamp (385 aa).

It belongs to the beta sliding clamp family. Forms a ring-shaped head-to-tail homodimer around DNA which binds and tethers DNA polymerases and other proteins to the DNA. The DNA replisome complex has a single clamp-loading complex (3 tau and 1 each of delta, delta', psi and chi subunits) which binds 3 Pol III cores (1 core on the leading strand and 2 on the lagging strand) each with a beta sliding clamp dimer. Additional proteins in the replisome are other copies of gamma, psi and chi, Ssb, DNA helicase and RNA primase.

It is found in the cytoplasm. Functionally, confers DNA tethering and processivity to DNA polymerases and other proteins. Acts as a clamp, forming a ring around DNA (a reaction catalyzed by the clamp-loading complex) which diffuses in an ATP-independent manner freely and bidirectionally along dsDNA. Initially characterized for its ability to contact the catalytic subunit of DNA polymerase III (Pol III), a complex, multichain enzyme responsible for most of the replicative synthesis in bacteria; Pol III exhibits 3'-5' exonuclease proofreading activity. The beta chain is required for initiation of replication as well as for processivity of DNA replication. The chain is Beta sliding clamp (dnaN) from Borreliella burgdorferi (strain ATCC 35210 / DSM 4680 / CIP 102532 / B31) (Borrelia burgdorferi).